The sequence spans 697 residues: MAR-binding filament-like protein 1 (697 aa).

Residues 1-41 constitute a chloroplast transit peptide; the sequence is MATSCFPPFSASSSSLCSSQFTPLLSCPRNTQICRKKRPVM. The N-terminal 38 residues, 42–79, are a transit peptide targeting the thylakoid; sequence ASMHSENQKESNVCNRRSILFVGFSVLPLLNLRARALE. At 80–106 the chain is on the lumenal, thylakoid side; the sequence is GLSTDSQAQPQKEETEQTIQGSAGNPF. Residues 81–100 are disordered; that stretch reads LSTDSQAQPQKEETEQTIQG. A helical membrane pass occupies residues 107–127; that stretch reads VSLLNGLGVVGSGVLGSLYAL. Residues 128 to 697 are Stromal-facing; that stretch reads ARNEKAVSDA…GEKEKVNVQQ (570 aa). Residues 203–671 adopt a coiled-coil conformation; it reads LQNEKKLAED…KGEILRLRSQ (469 aa). A disordered region spans residues 599 to 629; the sequence is TSRNSSLEDEREVHRQSVSEQKQISQEAQEN. Residues 604 to 615 are compositionally biased toward basic and acidic residues; that stretch reads SLEDEREVHRQS. A compositionally biased stretch (polar residues) spans 616 to 627; the sequence is VSEQKQISQEAQ.

As to quaternary structure, interacts with MAF1. Interacts with PTST2; the interaction is essential for the initiation of starch granules biosynthesis in leaf chloroplasts, for the correct location of the process in the stromal spaces between the thylakoid membranes, and for the association of PTST2 with the thylakoid membranes. Post-translationally, phosphorylated in vitro by human casein kinase II. In terms of processing, predicted to be translocated into the thylakoid by the Tat system.

Its subcellular location is the plastid. The protein localises to the chloroplast. It localises to the chloroplast thylakoid membrane. The protein resides in the chloroplast stroma. It is found in the chloroplast nucleoid. Its subcellular location is the nucleus. The protein localises to the nucleus matrix. Its function is as follows. Required for the initiation of starch granules biosynthesis in leaf chloroplasts. Anchored to the thylakoid membranes with its C-terminus facing into the stroma where it is essential for localizing PTST2 and SS4 to the stromal spaces between the thylakoid membranes in order to begin starch granule formation. Associated with leaf chloroplastic nucleoids in vivo. Binds to various chloroplastic double-stranded DNA fragments without particular sequence specificity in vitro. May function at the interface between nucleoids and thylakoids possibly by anchoring nucleoids to the thylakoid membrane system in mature chloroplasts. Binds nuclear DNA. Interacts with chromatin via matrix attachment regions (MARs). Likely to participate in nuclear architecture by connecting chromatin with the nuclear matrix and potentially with the nuclear envelope. The chain is MAR-binding filament-like protein 1 from Solanum lycopersicum (Tomato).